Here is a 164-residue protein sequence, read N- to C-terminus: 6,7-dimethyl-8-ribityllumazine synthase (164 aa).

5-amino-6-(D-ribitylamino)uracil is bound by residues phenylalanine 24, 62–64 (SFE), and 86–88 (AVI). 91–92 (QT) is a binding site for (2S)-2-hydroxy-3-oxobutyl phosphate. Residue histidine 94 is the Proton donor of the active site. Phenylalanine 119 is a binding site for 5-amino-6-(D-ribitylamino)uracil. Arginine 133 lines the (2S)-2-hydroxy-3-oxobutyl phosphate pocket.

The protein belongs to the DMRL synthase family.

It catalyses the reaction (2S)-2-hydroxy-3-oxobutyl phosphate + 5-amino-6-(D-ribitylamino)uracil = 6,7-dimethyl-8-(1-D-ribityl)lumazine + phosphate + 2 H2O + H(+). The protein operates within cofactor biosynthesis; riboflavin biosynthesis; riboflavin from 2-hydroxy-3-oxobutyl phosphate and 5-amino-6-(D-ribitylamino)uracil: step 1/2. Functionally, catalyzes the formation of 6,7-dimethyl-8-ribityllumazine by condensation of 5-amino-6-(D-ribitylamino)uracil with 3,4-dihydroxy-2-butanone 4-phosphate. This is the penultimate step in the biosynthesis of riboflavin. The polypeptide is 6,7-dimethyl-8-ribityllumazine synthase (Synechocystis sp. (strain ATCC 27184 / PCC 6803 / Kazusa)).